Reading from the N-terminus, the 335-residue chain is Non-structural protein P9-1 (335 aa).

The span at 27–42 shows a compositional bias: low complexity; the sequence is FNANTKNQNQNTSNTQ. The disordered stretch occupies residues 27-48; the sequence is FNANTKNQNQNTSNTQSSGGIT.

The polypeptide is Non-structural protein P9-1 (S9) (Fiji disease virus (isolate Sugarcane) (FDV)).